The sequence spans 412 residues: Mitochondrial distribution and morphology protein 12 (412 aa).

The SMP-LTD domain occupies 1–410; that stretch reads MSIDLEWAKL…FPNFHTLVMG (410 aa). 4 disordered regions span residues 66-96, 108-136, 166-238, and 314-354; these read EDDE…DGYE, YTEG…SPTD, QGSG…QQEN, and PAGD…KPLP. Residues 220–238 show a composition bias toward low complexity; sequence NQPVFPSQQPQQQQPQQEN.

Belongs to the MDM12 family. As to quaternary structure, component of the ER-mitochondria encounter structure (ERMES) or MDM complex, composed of MMM1, MDM10, MDM12 and MDM34. An MMM1 homodimer associates with one molecule of MDM12 on each side in a pairwise head-to-tail manner, and the SMP-LTD domains of MMM1 and MDM12 generate a continuous hydrophobic tunnel for phospholipid trafficking.

Its subcellular location is the mitochondrion outer membrane. It localises to the endoplasmic reticulum membrane. Its function is as follows. Component of the ERMES/MDM complex, which serves as a molecular tether to connect the endoplasmic reticulum (ER) and mitochondria. Components of this complex are involved in the control of mitochondrial shape and protein biogenesis, and function in nonvesicular lipid trafficking between the ER and mitochondria. MDM12 is required for the interaction of the ER-resident membrane protein MMM1 and the outer mitochondrial membrane-resident beta-barrel protein MDM10. The MDM12-MMM1 subcomplex functions in the major beta-barrel assembly pathway that is responsible for biogenesis of all mitochondrial outer membrane beta-barrel proteins, and acts in a late step after the SAM complex. The MDM10-MDM12-MMM1 subcomplex further acts in the TOM40-specific pathway after the action of the MDM12-MMM1 complex. Essential for establishing and maintaining the structure of mitochondria and maintenance of mtDNA nucleoids. The chain is Mitochondrial distribution and morphology protein 12 from Coprinopsis cinerea (strain Okayama-7 / 130 / ATCC MYA-4618 / FGSC 9003) (Inky cap fungus).